The chain runs to 376 residues: UDP-N-acetylglucosamine--N-acetylmuramyl-(pentapeptide) pyrophosphoryl-undecaprenol N-acetylglucosamine transferase (376 aa).

UDP-N-acetyl-alpha-D-glucosamine-binding positions include 14 to 16, Asn128, Arg169, Ser201, Ile256, and Gln301; that span reads TGG.

This sequence belongs to the glycosyltransferase 28 family. MurG subfamily.

Its subcellular location is the cell inner membrane. It catalyses the reaction di-trans,octa-cis-undecaprenyl diphospho-N-acetyl-alpha-D-muramoyl-L-alanyl-D-glutamyl-meso-2,6-diaminopimeloyl-D-alanyl-D-alanine + UDP-N-acetyl-alpha-D-glucosamine = di-trans,octa-cis-undecaprenyl diphospho-[N-acetyl-alpha-D-glucosaminyl-(1-&gt;4)]-N-acetyl-alpha-D-muramoyl-L-alanyl-D-glutamyl-meso-2,6-diaminopimeloyl-D-alanyl-D-alanine + UDP + H(+). It participates in cell wall biogenesis; peptidoglycan biosynthesis. Its function is as follows. Cell wall formation. Catalyzes the transfer of a GlcNAc subunit on undecaprenyl-pyrophosphoryl-MurNAc-pentapeptide (lipid intermediate I) to form undecaprenyl-pyrophosphoryl-MurNAc-(pentapeptide)GlcNAc (lipid intermediate II). The sequence is that of UDP-N-acetylglucosamine--N-acetylmuramyl-(pentapeptide) pyrophosphoryl-undecaprenol N-acetylglucosamine transferase from Phocaeicola vulgatus (strain ATCC 8482 / DSM 1447 / JCM 5826 / CCUG 4940 / NBRC 14291 / NCTC 11154) (Bacteroides vulgatus).